The sequence spans 113 residues: Holo-[acyl-carrier-protein] synthase (113 aa).

Positions 8 and 57 each coordinate Mg(2+).

It belongs to the P-Pant transferase superfamily. AcpS family. Requires Mg(2+) as cofactor.

The protein resides in the cytoplasm. It carries out the reaction apo-[ACP] + CoA = holo-[ACP] + adenosine 3',5'-bisphosphate + H(+). Its function is as follows. Transfers the 4'-phosphopantetheine moiety from coenzyme A to a Ser of acyl-carrier-protein. This chain is Holo-[acyl-carrier-protein] synthase, found in Thermodesulfovibrio yellowstonii (strain ATCC 51303 / DSM 11347 / YP87).